A 391-amino-acid polypeptide reads, in one-letter code: MDKIGVLLMNLGGPERINDVGPFLYNLFSDPEIIRIPFPVFQKPLAWLISTLRSTTSQQAYLSIGGGSPIRRITEQQARELQSKLRDKGLNATTYIAMRYWHPFTESAIADMKADGIDQVVVIPLYPHFSISTSGSSFRELKKLRDSDDEFKKVPMRCVRSWYSQSDYLKSMVELISEQISLCESPSKAHIFFTAHGVPKSYVEEAGDPYKQQIEDCSLLIINELEKCLGHSNPHTLSYQSRVGPVEWLKPYTEEVLADLGRSNVNDLIVVPISFVGEHIETLQEIDIEYKEIAEQAGIKNFRRVKALNTHPTFIEGLSDLVISCLEGPLVNLEEASQLPEKVKLYPQEKWQWGWNNSSEVWNGRVAMIIFLVLFIELISGSGPLHKLGIL.

Fe cation contacts are provided by His196 and Glu281.

Belongs to the ferrochelatase family.

The protein localises to the cytoplasm. It catalyses the reaction heme b + 2 H(+) = protoporphyrin IX + Fe(2+). It functions in the pathway porphyrin-containing compound metabolism; protoheme biosynthesis; protoheme from protoporphyrin-IX: step 1/1. Functionally, catalyzes the ferrous insertion into protoporphyrin IX. In Prochlorococcus marinus (strain MIT 9215), this protein is Ferrochelatase.